We begin with the raw amino-acid sequence, 368 residues long: tRNA-specific 2-thiouridylase MnmA (368 aa).

ATP contacts are provided by residues 24–31 and leucine 50; that span reads AMSGGVDS. Cysteine 117 acts as the Nucleophile in catalysis. Cysteine 117 and cysteine 213 are disulfide-bonded. Position 141 (glycine 141) interacts with ATP. Positions 163–165 are interaction with tRNA; sequence KDQ. Cysteine 213 (cysteine persulfide intermediate) is an active-site residue.

The protein belongs to the MnmA/TRMU family.

The protein localises to the cytoplasm. The catalysed reaction is S-sulfanyl-L-cysteinyl-[protein] + uridine(34) in tRNA + AH2 + ATP = 2-thiouridine(34) in tRNA + L-cysteinyl-[protein] + A + AMP + diphosphate + H(+). Its function is as follows. Catalyzes the 2-thiolation of uridine at the wobble position (U34) of tRNA, leading to the formation of s(2)U34. This chain is tRNA-specific 2-thiouridylase MnmA, found in Wolbachia pipientis subsp. Culex pipiens (strain wPip).